The chain runs to 376 residues: Calcium uniporter protein, mitochondrial (376 aa).

A mitochondrion-targeting transit peptide spans 1 to 34; that stretch reads MAAKVCRSVLLLSRSSGAVASSAYPAFGVSSQRH. Residues 35–257 are Mitochondrial matrix-facing; that stretch reads QGTKTEALSM…LSKKAERRTT (223 aa). The segment at 99-189 is N-terminal MCU domain; the sequence is VSVVYQNGLP…TSYLVQPPRR (91 aa). Residues 213 to 254 are a coiled coil; the sequence is TLRIEEHQLNKERELIGRLEDLNSQLQPLEKVKEELSKKAER. Residues 258–280 form a helical membrane-spanning segment; that stretch reads WVLWGGMAYMATQFGILARLTWW. Over 281 to 289 the chain is Mitochondrial intermembrane; sequence EYSWDIMEP. A Selectivity filter motif is present at residues 284 to 292; sequence WDIMEPVTY. Position 288 (E288) interacts with Ca(2+). A helical transmembrane segment spans residues 290–309; it reads VTYFITYGTAMAMYAYFVLT. The juxtamembrane helix stretch occupies residues 309-314; it reads TRQEYL. The Mitochondrial matrix segment spans residues 310–376; sequence RQEYLYPDAR…PIQQIDTSKD (67 aa). Residues 336-363 are a coiled coil; it reads FDIEKYNKLKDAIAEAELDLKRLRDPLQ.

This sequence belongs to the MCU (TC 1.A.77) family. As to quaternary structure, homotetramer. Component of the uniplex complex.

The protein localises to the mitochondrion inner membrane. It carries out the reaction Ca(2+)(in) = Ca(2+)(out). MCU channel activity is regulated by the heterodimer composed of micu1 and micu2, which act as calcium-sensors. At low calcium levels, micu1 occludes the pore of the MCU channel, preventing mitochondrial calcium uptake. At higher calcium levels, calcium-binding to micu1 and micu2 induces a conformational change that weakens mcu-micu1 interactions and moves the micu1-micu2 heterodimer away from the pore, allowing calcium permeation through the channel. MCU channel activity is gated by emre/smdt1 via the juxtamembrane helix loop. Inhibited by ruthenium red or its derivative Ru360. Functionally, channel-forming and calcium-conducting subunit of the mitochondrial inner membrane calcium uniporter complex (uniplex), which mediates calcium uptake into the mitochondrial matrix. Mcu channel activity is regulated by the calcium-sensor subunits of the uniplex micu1 and micu2. Mitochondrial calcium homeostasis plays key roles in cellular physiology and regulates ATP production, cytoplasmic calcium signals and activation of cell death pathways. Involved in buffering the amplitude of systolic calcium rises in cardiomyocytes. While dispensable for baseline homeostatic cardiac function, acts as a key regulator of short-term mitochondrial calcium loading underlying a 'fight-or-flight' response during acute stress: acts by mediating a rapid increase of mitochondrial calcium in pacemaker cells. Mitochondrial calcium uptake in skeletal muscle cells is involved in muscle size in adults. The protein is Calcium uniporter protein, mitochondrial of Danio rerio (Zebrafish).